Here is a 180-residue protein sequence, read N- to C-terminus: ATP synthase subunit delta (180 aa).

This sequence belongs to the ATPase delta chain family. In terms of assembly, F-type ATPases have 2 components, F(1) - the catalytic core - and F(0) - the membrane proton channel. F(1) has five subunits: alpha(3), beta(3), gamma(1), delta(1), epsilon(1). F(0) has three main subunits: a(1), b(2) and c(10-14). The alpha and beta chains form an alternating ring which encloses part of the gamma chain. F(1) is attached to F(0) by a central stalk formed by the gamma and epsilon chains, while a peripheral stalk is formed by the delta and b chains.

It is found in the cell membrane. F(1)F(0) ATP synthase produces ATP from ADP in the presence of a proton or sodium gradient. F-type ATPases consist of two structural domains, F(1) containing the extramembraneous catalytic core and F(0) containing the membrane proton channel, linked together by a central stalk and a peripheral stalk. During catalysis, ATP synthesis in the catalytic domain of F(1) is coupled via a rotary mechanism of the central stalk subunits to proton translocation. Functionally, this protein is part of the stalk that links CF(0) to CF(1). It either transmits conformational changes from CF(0) to CF(1) or is implicated in proton conduction. The polypeptide is ATP synthase subunit delta (Bacillus cereus (strain 03BB102)).